A 360-amino-acid chain; its full sequence is Inward rectifier potassium channel 13 (360 aa).

Residues 1–50 lie on the Cytoplasmic side of the membrane; sequence MESSNCKVITPLLSQRHRRMVTKDGHSTLQTDGAPRGLVYLRDAWGTLID. Residues 51–77 form a helical membrane-spanning segment; the sequence is MRWRWVMLVFSASFVLHWLVFAVLWYV. At 78-105 the chain is on the extracellular side; sequence LAEMNGDLELDHDAPPENHTICVKYITS. The helical; Pore-forming intramembrane region spans 106 to 122; that stretch reads FTAAFSFSLETQLTIGY. Residues 119–124 carry the Selectivity filter motif; sequence TIGYGT. At 123–131 the chain is on the extracellular side; it reads GTMFPSGDC. The chain crosses the membrane as a helical span at residues 132-157; the sequence is PSAIALLAIQMLLGLMLEAFITGAFV. The Cytoplasmic portion of the chain corresponds to 158-360; sequence AKIARPKNRA…FQISETGLTE (203 aa). Phosphoserine; by PKC is present on Ser201. The residue at position 287 (Ser287) is a Phosphoserine; by PKA.

Belongs to the inward rectifier-type potassium channel (TC 1.A.2.1) family. KCNJ13 subfamily. As to quaternary structure, homotetramer. Phosphorylation at Ser-201 by PKC strongly inhibits ionic currents, while phosphorylation at Ser-287 by PKA increases them.

The protein localises to the membrane. It localises to the cell membrane. The catalysed reaction is K(+)(in) = K(+)(out). Inhibited by Ba(2+) and Cs(+), although sensitivity to those inhibitors is much lower than in other Kir channels. In terms of biological role, inward rectifier potassium channels are characterized by a greater tendency to allow potassium to flow into the cell rather than out of it. Their voltage dependence is regulated by the concentration of extracellular potassium; as external potassium is raised, the voltage range of the channel opening shifts to more positive voltages. The inward rectification is mainly due to the blockage of outward current by internal magnesium. KCNJ13 has a very low single channel conductance, low sensitivity to block by external barium and cesium, and no dependence of its inward rectification properties on the internal blocking particle magnesium. This is Inward rectifier potassium channel 13 (KCNJ13) from Cavia porcellus (Guinea pig).